Here is a 718-residue protein sequence, read N- to C-terminus: Catalase-peroxidase 1 (718 aa).

A cross-link (tryptophyl-tyrosyl-methioninium (Trp-Tyr) (with M-247)) is located at residues 93–221; sequence WHSAGTYRIA…LAAVMMGLIY (129 aa). The active-site Proton acceptor is the His94. Residues 221–247 constitute a cross-link (tryptophyl-tyrosyl-methioninium (Tyr-Met) (with W-93)); that stretch reads YVNPEGVDGNPDPLKTAQDMRVTFARM. His262 lines the heme b pocket.

The protein belongs to the peroxidase family. Peroxidase/catalase subfamily. Homodimer or homotetramer. The cofactor is heme b. In terms of processing, formation of the three residue Trp-Tyr-Met cross-link is important for the catalase, but not the peroxidase activity of the enzyme.

The catalysed reaction is H2O2 + AH2 = A + 2 H2O. The enzyme catalyses 2 H2O2 = O2 + 2 H2O. Its function is as follows. Bifunctional enzyme with both catalase and broad-spectrum peroxidase activity. This is Catalase-peroxidase 1 from Shewanella amazonensis (strain ATCC BAA-1098 / SB2B).